Here is a 316-residue protein sequence, read N- to C-terminus: Glycine--tRNA ligase alpha subunit (316 aa).

Belongs to the class-II aminoacyl-tRNA synthetase family. In terms of assembly, tetramer of two alpha and two beta subunits.

It is found in the cytoplasm. The enzyme catalyses tRNA(Gly) + glycine + ATP = glycyl-tRNA(Gly) + AMP + diphosphate. This chain is Glycine--tRNA ligase alpha subunit, found in Cupriavidus taiwanensis (strain DSM 17343 / BCRC 17206 / CCUG 44338 / CIP 107171 / LMG 19424 / R1) (Ralstonia taiwanensis (strain LMG 19424)).